The following is a 91-amino-acid chain: MGRSLKKGPFIADSLLRKLEKQNDNDDKSVIKTWSRASTILPMMIGHTIAVHNGKSHIPVFITEQMVGHKLGEFAPTRTFKGHIKDKKGGR.

It belongs to the universal ribosomal protein uS19 family.

Protein S19 forms a complex with S13 that binds strongly to the 16S ribosomal RNA. The polypeptide is Small ribosomal subunit protein uS19 (Synechococcus sp. (strain CC9902)).